The following is a 111-amino-acid chain: Large ribosomal subunit protein uL22 (111 aa).

The protein belongs to the universal ribosomal protein uL22 family. As to quaternary structure, part of the 50S ribosomal subunit.

Functionally, this protein binds specifically to 23S rRNA; its binding is stimulated by other ribosomal proteins, e.g. L4, L17, and L20. It is important during the early stages of 50S assembly. It makes multiple contacts with different domains of the 23S rRNA in the assembled 50S subunit and ribosome. In terms of biological role, the globular domain of the protein is located near the polypeptide exit tunnel on the outside of the subunit, while an extended beta-hairpin is found that lines the wall of the exit tunnel in the center of the 70S ribosome. This Wigglesworthia glossinidia brevipalpis protein is Large ribosomal subunit protein uL22.